We begin with the raw amino-acid sequence, 209 residues long: MLLIAGLGNPGPTYAKNRHNIGFMAVDEIARRWGFPAARSRFRSLAAEGAIDTPQGPVRTLILKPQTYYNESGRAVGEAMKFFKLQPSDVVVFYDEIDLAPGRFRMKTGGGAAGNNGIRSVASQIGPDFRRARLGTGHPGQKELVHGHVLSDFHKAEMKWVEPLLEACADAAPLLALGDDEKYQAEVMRLAPAEKADPRKLAQGKPRGE.

Tyr-14 lines the tRNA pocket. His-19 acts as the Proton acceptor in catalysis. 3 residues coordinate tRNA: Tyr-68, Asn-70, and Asn-116.

The protein belongs to the PTH family. In terms of assembly, monomer.

It is found in the cytoplasm. It catalyses the reaction an N-acyl-L-alpha-aminoacyl-tRNA + H2O = an N-acyl-L-amino acid + a tRNA + H(+). Hydrolyzes ribosome-free peptidyl-tRNAs (with 1 or more amino acids incorporated), which drop off the ribosome during protein synthesis, or as a result of ribosome stalling. Its function is as follows. Catalyzes the release of premature peptidyl moieties from peptidyl-tRNA molecules trapped in stalled 50S ribosomal subunits, and thus maintains levels of free tRNAs and 50S ribosomes. The sequence is that of Peptidyl-tRNA hydrolase from Phenylobacterium zucineum (strain HLK1).